A 195-amino-acid polypeptide reads, in one-letter code: BAG family molecular chaperone regulator 1A (195 aa).

One can recognise a Ubiquitin-like domain in the interval 6–72 (STVTIHYGNQ…KLGLKNHSKI (67 aa)). Residues 78-98 (HKQQRGSKEKDTVEPAPKAEA) are disordered. Positions 83 to 98 (GSKEKDTVEPAPKAEA) are enriched in basic and acidic residues. One can recognise a BAG domain in the interval 109-190 (EIKAIDQYVD…KMLDHVDQTS (82 aa)).

In terms of assembly, binds to the ATPase domain of HSP70/HSC chaperones.

Functionally, inhibits the chaperone activity of HSP70/HSC70 by promoting substrate release. The protein is BAG family molecular chaperone regulator 1A (bag101) of Schizosaccharomyces pombe (strain 972 / ATCC 24843) (Fission yeast).